The chain runs to 447 residues: Aladin (447 aa).

The tract at residues 49–69 (STPSSLQENEGQENGDKASGE) is disordered. WD repeat units follow at residues 97 to 138 (LSEI…EPCI), 142 to 181 (DSQR…NMAL), 210 to 250 (QNDE…GTPI), and 252 to 291 (RGLG…SEPW).

In terms of assembly, part of the nuclear pore complex (NPC). The NPC has an eight-fold symmetrical structure comprising a central transport channel and two rings, the cytoplasmic and nuclear rings, to which eight filaments are attached. The cytoplasmic filaments have loose ends, while the nuclear filaments are joined in a distal ring, forming a nuclear basket. NPCs are highly dynamic in configuration and composition, and can be devided in 3 subcomplexes, the NUP62 subcomplex, the NUP107-160 subcomplex and the NUP93 subcomplex, containing approximately 30 different nucleoporin proteins.

It is found in the nucleus envelope. Its subcellular location is the nucleus. It localises to the nuclear pore complex. In Arabidopsis thaliana (Mouse-ear cress), this protein is Aladin.